Reading from the N-terminus, the 159-residue chain is MMFGFGLLKQYAGTTEQISTAAEALVGRSTTLTEALKAAAINVGRKPVETTDLAAIKEVEARAIGGDIESDGGVTAVASKAVARNQKIGEDNEKTNLGDVIAEIDVKVTRDREVTSEDAEAVIRAELNHSPFNNIIPGGVAESVTAAYKLNCNPCNVSL.

2 consecutive SMP domains span residues 30–87 and 96–151; these read TTLT…RNQK and NLGD…YKLN.

It belongs to the LEA type SMP family.

The protein localises to the cytoplasm. Its subcellular location is the nucleus. Its function is as follows. LEA proteins are late embryonic proteins abundant in higher plant seed embryos. The function of those proteins is not known. The sequence is that of Late embryogenesis abundant protein 50 from Arabidopsis thaliana (Mouse-ear cress).